A 132-amino-acid polypeptide reads, in one-letter code: SH2 domain-containing protein 1B (132 aa).

Positions 5–101 (YYHGRLTKQD…GMVVHLLKPI (97 aa)) constitute an SH2 domain. Phosphotyrosine is present on Tyr-127.

In terms of assembly, binds to the phosphorylated receptors CD84, SLAMF1, LY9 and CD244. Does not bind to non-phosphorylated SLAMF1. Interacts with SLAMF7 (via ITSM phosphorylated on 'Tyr-304'). Interacts with Src kinases HCK, LYN, FYN, FGR and LCK (via kinase domains). Interacts (phosphorylated at Tyr-127) with PLCG1.

Its function is as follows. Cytoplasmic adapter regulating receptors of the signaling lymphocytic activation molecule (SLAM) family such as CD84, SLAMF1, LY9 and CD244. In SLAM signaling seems to cooperate with SH2D1A/SAP. Plays a role in regulation of effector functions of natural killer (NK) cells by controlling signal transduction through CD244/2B4 without effecting its tyrosine phosphorylation; downstream signaling involves PLCG1 and ERK activation. Activation of SLAMF7-mediated NK cell function does not effect receptor tyrosine phosphorylation but distal signaling. In the context of NK cell-mediated cytotoxicity does not enhance conjugate formation with target cells but stimulates polarization of the microtubule-organizing center and cytotoxic granules toward the NK cell synapse. Negatively regulates CD40-induced cytokine production in dendritic cells downstream of SLAM family receptors probably by inducing activation of the PI3K pathway to inhibit p38 MAPK and JNK activation. The sequence is that of SH2 domain-containing protein 1B (SH2D1B) from Homo sapiens (Human).